Reading from the N-terminus, the 689-residue chain is Glycine--tRNA ligase beta subunit (689 aa).

Belongs to the class-II aminoacyl-tRNA synthetase family. In terms of assembly, tetramer of two alpha and two beta subunits.

It localises to the cytoplasm. It carries out the reaction tRNA(Gly) + glycine + ATP = glycyl-tRNA(Gly) + AMP + diphosphate. The chain is Glycine--tRNA ligase beta subunit from Shewanella sediminis (strain HAW-EB3).